The following is a 236-amino-acid chain: Thrombin-like enzyme kangshuanmei (236 aa).

The region spanning 1–227 is the Peptidase S1 domain; that stretch reads VIGGDECNIN…HLDWIQSIIA (227 aa). Cystine bridges form between Cys-7–Cys-141, Cys-28–Cys-44, Cys-78–Cys-234, Cys-120–Cys-188, Cys-152–Cys-167, and Cys-178–Cys-203. The active-site Charge relay system is His-43. A glycan (N-linked (GlcNAc...) asparagine) is linked at Asn-81. Residue Asp-88 is the Charge relay system of the active site. Asn-99 and Asn-148 each carry an N-linked (GlcNAc...) asparagine glycan. The Charge relay system role is filled by Ser-182. Asn-229 carries an N-linked (GlcNAc...) asparagine glycan.

Belongs to the peptidase S1 family. Snake venom subfamily. As to quaternary structure, monomer. In terms of processing, N-glycosylated by units composed of Fuc, Man, GlcNAc, Gal and NeuAC residues. As to expression, expressed by the venom gland.

It is found in the secreted. Inhibited by 4-(2-aminoethyl)-benzensulfonyl fluoride. Not inhibited by antithrombin-III. Functionally, thrombin-like snake venom serine protease. Cleaves bonds after Arg and Lys, converts fibrinogen (FGA and FGB) to fibrin and releases both fibrinopeptides A and B, and fibrinogen peptide Bbeta1-42. Has a blood clotting activity. This Gloydius brevicauda (Korean slamosa snake) protein is Thrombin-like enzyme kangshuanmei.